Consider the following 185-residue polypeptide: UPF0301 protein MS0260 (185 aa).

The protein belongs to the UPF0301 (AlgH) family.

The sequence is that of UPF0301 protein MS0260 from Mannheimia succiniciproducens (strain KCTC 0769BP / MBEL55E).